The sequence spans 646 residues: Probable lysosomal cobalamin transporter (646 aa).

5 helical membrane passes run L11–T31, I42–L62, T102–F122, L149–G169, and A193–T213. The N-linked (GlcNAc...) asparagine glycan is linked to N297. The next 2 helical transmembrane spans lie at L317–T337 and I380–I400. Disordered regions lie at residues Q459 to R588 and V603 to E623. Low complexity-rich tracts occupy residues P460–A490 and P517–R543. N545 carries an N-linked (GlcNAc...) asparagine glycan. Residues A565–R582 are compositionally biased toward low complexity. An N-linked (GlcNAc...) asparagine glycan is attached at N626.

It belongs to the LIMR family. LMBRD1 subfamily.

The protein resides in the lysosome membrane. In terms of biological role, probable lysosomal cobalamin transporter. Required to export cobalamin from lysosomes allowing its conversion to cofactors. This is Probable lysosomal cobalamin transporter from Chaetomium globosum (strain ATCC 6205 / CBS 148.51 / DSM 1962 / NBRC 6347 / NRRL 1970) (Soil fungus).